A 218-amino-acid chain; its full sequence is Sodium channel regulatory subunit beta-1 (218 aa).

A signal peptide spans 1–18 (MGTLLAFVVGAALVSSAW). Topologically, residues 19-157 (GGCVEVDSET…DKANRDMASI (139 aa)) are extracellular. Disulfide bonds link cysteine 21-cysteine 43 and cysteine 40-cysteine 121. An Ig-like C2-type domain is found at 22-150 (VEVDSETEAV…KIHLEVVDKA (129 aa)). N-linked (GlcNAc...) asparagine glycosylation is found at asparagine 93, asparagine 110, asparagine 114, and asparagine 135. A helical transmembrane segment spans residues 158 to 179 (VSEIMMYVLIVVLTIWLVAEMV). The Cytoplasmic portion of the chain corresponds to 180 to 218 (YCYKKIAAATEAAAQENASEYLAITSESKENCTGVQVAE).

It belongs to the sodium channel auxiliary subunit SCN1B (TC 8.A.17) family. In terms of assembly, a voltage-gated sodium (Nav) channel consists of an ion-conducting pore-forming alpha subunit functional on its own that is regulated by one or more beta subunits. Interacts with SCN1A; regulatory subunit of SCN1A/Nav1.1. Interacts with SCN3A; regulatory subunit of SCN3A/Nav1.3. Interacts with SCN4A; regulatory subunit of SCN4A/Nav1.4. Interacts with SCN5A; regulatory subunit of SCN5A/Nav1.5. Interacts with SCN8A; regulatory subunit of SCN8A/Nav1.6. Interacts with SCN9A; regulatory subunit of SCN9A/Nav1.7. Interacts with SCN10A; regulatory subunit of SCN10A/Nav1.8. Interacts with NFASC. Interacts with TMEM65.

It is found in the cell membrane. It localises to the perikaryon. Its subcellular location is the cell projection. The protein localises to the axon. Its function is as follows. Regulatory subunit of multiple voltage-gated sodium (Nav) channels directly mediating the depolarization of excitable membranes. Navs, also called VGSCs (voltage-gated sodium channels) or VDSCs (voltage-dependent sodium channels), operate by switching between closed and open conformations depending on the voltage difference across the membrane. In the open conformation they allow Na(+) ions to selectively pass through the pore, along their electrochemical gradient. The influx of Na+ ions provokes membrane depolarization, initiating the propagation of electrical signals throughout cells and tissues. The accessory beta subunits participate in localization and functional modulation of the Nav channels. Modulates the activity of SCN1A/Nav1.1, SCN2A/Nav1.2, SCN3A/Nav1.3, SCN4A/Nav1.4, SCN5A/Nav1.5, SCN8A/Nav1.6, SCN9A/Nav1.7 and SCN10A/Nav1.8. The protein is Sodium channel regulatory subunit beta-1 of Bos taurus (Bovine).